Reading from the N-terminus, the 231-residue chain is Platelet-activating factor acetylhydrolase IB subunit alpha1 (231 aa).

N-acetylserine is present on Ser2. Ser2 carries the phosphoserine modification. Catalysis depends on residues Ser47, Asp192, and His195.

This sequence belongs to the 'GDSL' lipolytic enzyme family. Platelet-activating factor acetylhydrolase IB beta/gamma subunits subfamily. Forms a catalytic dimer which is either homodimer (alpha1/alpha1 homodimer) or heterodimer with PAFAH1B2 (alpha1/alpha2 heterodimer). Component of the cytosolic (PAF-AH (I)) heterotetrameric enzyme, which is composed of PAFAH1B1 (beta), PAFAH1B2 (alpha2) and PAFAH1B3 (alpha1) subunits. The catalytic activity of the enzyme resides in the alpha1 (PAFAH1B3) and alpha2 (PAFAH1B2) subunits, whereas the beta subunit (PAFAH1B1) has regulatory activity. Trimer formation is not essential for the catalytic activity. Interacts with VLDLR; this interaction may modulate the Reelin pathway.

Its subcellular location is the cytoplasm. The catalysed reaction is a 1-O-alkyl-2-acetyl-sn-glycero-3-phosphocholine + H2O = a 1-O-alkyl-sn-glycero-3-phosphocholine + acetate + H(+). The enzyme catalyses 1-O-hexadecyl-2-acetyl-sn-glycero-3-phosphocholine + H2O = 1-O-hexadecyl-sn-glycero-3-phosphocholine + acetate + H(+). It catalyses the reaction 1-O-hexadecyl-2-acetyl-sn-glycero-3-phosphate + H2O = 1-O-hexadecyl-sn-glycero-3-phosphate + acetate + H(+). With respect to regulation, beta subunit (PAFAH1B1) inhibits the acetylhydrolase activity of the alpha1/alpha1 catalytic homodimer. Its function is as follows. Alpha1 catalytic subunit of the cytosolic type I platelet-activating factor (PAF) acetylhydrolase (PAF-AH (I)) heterotetrameric enzyme that catalyzes the hydrolyze of the acetyl group at the sn-2 position of PAF and its analogs and modulates the action of PAF. The activity and substrate specificity of PAF-AH (I) are affected by its subunit composition. Both alpha1/alpha1 homodimer (PAFAH1B3/PAFAH1B3 homodimer) and alpha1/alpha2 heterodimer(PAFAH1B3/PAFAH1B2 heterodimer) hydrolyze 1-O-alkyl-2-acetyl-sn-glycero-3-phosphoric acid (AAGPA) more efficiently than PAF, but they have little hydrolytic activity towards 1-O-alkyl-2-acetyl-sn-glycero-3-phosphorylethanolamine (AAGPE). Plays an important role during the development of brain. The chain is Platelet-activating factor acetylhydrolase IB subunit alpha1 from Pongo abelii (Sumatran orangutan).